Here is a 104-residue protein sequence, read N- to C-terminus: Small ribosomal subunit protein bS18c (104 aa).

The interval 84-104 (DKQFERSESTPRTIGLRTRNK) is disordered.

It belongs to the bacterial ribosomal protein bS18 family. In terms of assembly, part of the 30S ribosomal subunit.

It is found in the plastid. Its subcellular location is the chloroplast. The sequence is that of Small ribosomal subunit protein bS18c from Cucumis sativus (Cucumber).